The following is a 1400-amino-acid chain: Clustered mitochondria protein homolog (1400 aa).

Disordered regions lie at residues 1 to 39, 56 to 78, and 212 to 243; these read MVSK…KEAS, GHDQ…QAED, and GDTG…KERP. Over residues 56–69 the composition is skewed to basic and acidic residues; that stretch reads GHDQAEEADSKQDG. Residues 380–622 form the Clu domain; that stretch reads RAEDAYTSRL…RTFPPDLNFL (243 aa). A disordered region spans residues 684–741; sequence AALQDSNAAGAGSENKPLALESCDGTPDSPTSSESTLTPEDSEATTVSENSSAENQEA. Low complexity predominate over residues 707 to 722; sequence DGTPDSPTSSESTLTP. Positions 727–741 are enriched in polar residues; that stretch reads ATTVSENSSAENQEA. TPR repeat units lie at residues 1088 to 1121, 1130 to 1163, 1172 to 1205, and 1214 to 1247; these read AFHF…FNNV, CACL…SERV, IQEY…MLVV, and ALLD…NTKY. Residues 1377-1388 show a composition bias toward polar residues; sequence QDSGKIQEQQGS. Residues 1377–1400 form a disordered region; that stretch reads QDSGKIQEQQGSHLELDDKLPVDD. Residues 1390–1400 are compositionally biased toward basic and acidic residues; sequence LELDDKLPVDD.

The protein belongs to the CLU family.

It localises to the cytoplasm. In terms of biological role, mRNA-binding protein involved in proper cytoplasmic distribution of mitochondria. The sequence is that of Clustered mitochondria protein homolog from Danio rerio (Zebrafish).